We begin with the raw amino-acid sequence, 459 residues long: UDP-N-acetylmuramoylalanine--D-glutamate ligase (459 aa).

Residue 120-126 coordinates ATP; the sequence is GSNGKTT.

It belongs to the MurCDEF family.

It is found in the cytoplasm. The enzyme catalyses UDP-N-acetyl-alpha-D-muramoyl-L-alanine + D-glutamate + ATP = UDP-N-acetyl-alpha-D-muramoyl-L-alanyl-D-glutamate + ADP + phosphate + H(+). It participates in cell wall biogenesis; peptidoglycan biosynthesis. Cell wall formation. Catalyzes the addition of glutamate to the nucleotide precursor UDP-N-acetylmuramoyl-L-alanine (UMA). In Lactobacillus acidophilus (strain ATCC 700396 / NCK56 / N2 / NCFM), this protein is UDP-N-acetylmuramoylalanine--D-glutamate ligase.